The sequence spans 349 residues: Xylitol-binding protein (349 aa).

An N-terminal signal peptide occupies residues 1-22 (MNITSKIGAIAAAGAVGLGLTA). The N-palmitoyl cysteine moiety is linked to residue cysteine 23. Cysteine 23 carries the S-diacylglycerol cysteine lipid modification. The xylitol site is built by tyrosine 42, asparagine 121, arginine 173, asparagine 224, aspartate 249, and glutamine 269.

The protein belongs to the bacterial solute-binding protein 2 family.

It localises to the cell membrane. In terms of biological role, part of an ABC transporter complex likely involved in xylitol import. Binds xylitol. The protein is Xylitol-binding protein of Mycolicibacterium smegmatis (strain ATCC 700084 / mc(2)155) (Mycobacterium smegmatis).